Consider the following 222-residue polypeptide: Octanoyltransferase (222 aa).

In terms of domain architecture, BPL/LPL catalytic spans 34–214 (AEAPSTVLLL…EFRKHEEALV (181 aa)). Substrate is bound by residues 72 to 79 (RGGKLTWH), 144 to 146 (AIG), and 157 to 159 (GIA). Residue C175 is the Acyl-thioester intermediate of the active site.

This sequence belongs to the LipB family.

The protein localises to the cytoplasm. It carries out the reaction octanoyl-[ACP] + L-lysyl-[protein] = N(6)-octanoyl-L-lysyl-[protein] + holo-[ACP] + H(+). It participates in protein modification; protein lipoylation via endogenous pathway; protein N(6)-(lipoyl)lysine from octanoyl-[acyl-carrier-protein]: step 1/2. Catalyzes the transfer of endogenously produced octanoic acid from octanoyl-acyl-carrier-protein onto the lipoyl domains of lipoate-dependent enzymes. Lipoyl-ACP can also act as a substrate although octanoyl-ACP is likely to be the physiological substrate. The polypeptide is Octanoyltransferase (Arthrobacter sp. (strain FB24)).